Here is a 376-residue protein sequence, read N- to C-terminus: MSVNLSKNGAALQAAYKDVLDEKTKTDWALYTYEGNSNDIRLAETGDGGLEELVEELSSGKVMYAFCRVKDPNSGLPKFVLINWTGEGVKDARKGMCANHVSTMASFLKGAHVTINARAEEDVEPESIMEKVAKASGANYNFHKESNRGNEGPQGPVGSVYQKTNAMSEIKRVGKENFWAKAEKDEEERRIEEHRRANVEKDRLERERKEREQREAEERERRFRERSKEIDGHRKQQEEVEKQQTVPASQRSVNPREMFLQKERSLPESGSVSAQPEQFTASQQEEENIYQDATENQNIYEDTPQEDPVYETGVAEDSGMCARALYDYQAADDTEISFDPDDVIIQIEMIDDGWWRGVAPSGHFGMFPANYVELLE.

One can recognise an ADF-H domain in the interval 2-133; it reads SVNLSKNGAA…EPESIMEKVA (132 aa). The stretch at 175-231 forms a coiled coil; the sequence is KENFWAKAEKDEEERRIEEHRRANVEKDRLERERKEREQREAEERERRFRERSKEID. The span at 202 to 242 shows a compositional bias: basic and acidic residues; it reads DRLERERKEREQREAEERERRFRERSKEIDGHRKQQEEVEK. Residues 202–288 are disordered; the sequence is DRLERERKER…FTASQQEEEN (87 aa). The span at 268–283 shows a compositional bias: polar residues; it reads ESGSVSAQPEQFTASQ. An SH3 domain is found at 317–376; sequence DSGMCARALYDYQAADDTEISFDPDDVIIQIEMIDDGWWRGVAPSGHFGMFPANYVELLE.

It belongs to the ABP1 family.

It is found in the cytoplasm. Its subcellular location is the cytoskeleton. The protein resides in the cell projection. The protein localises to the lamellipodium. It localises to the ruffle. It is found in the cell cortex. Its subcellular location is the cytosol. The protein resides in the synapse. The protein localises to the perikaryon. It localises to the neuron projection. It is found in the cell membrane. Its subcellular location is the cytoplasmic vesicle. The protein resides in the clathrin-coated vesicle membrane. The protein localises to the golgi apparatus membrane. It localises to the podosome. It is found in the early endosome. Its subcellular location is the dendrite. The protein resides in the postsynaptic density. Its function is as follows. Adapter protein that binds F-actin and dynamin, and thereby plays a role in receptor-mediated endocytosis. Plays a role in the reorganization of the actin cytoskeleton, formation of cell projections, such as neurites, in neuron morphogenesis and synapse formation. Does not bind G-actin and promote actin polymerization by itself, but excerts its functions by interaction with other proteins. Required for the formation of organized podosome rosettes. This Xenopus laevis (African clawed frog) protein is Drebrin-like protein B (dbnl-b).